The primary structure comprises 526 residues: MSGNKVEVDKRRTFAIISHPDAGKTTITEKVLLFGNALQKAGTVKGKKSGQHAKSDWMEMEKDRGISITTSVMQFPYHDALVNLLDTPGHEDFSEDTYRTLTAVDSCLMVIDSAKGVEQRTIKLMEVTRLRDTPIVTFMNKLDRDIRDPIELMDEVEEVLNIKCAPITWPIGCGKEFKGVYHLLRDEVILYQGGMGHTIQDSRVIKGLDNPELDDAIGSYAADIRDEMELVVGASHEFDLELFLKGELTPVYFGTALGNFGVDHILDGIVEWAPIPQPRETETRDVQPEEEKFSGFVFKIQANMDPKHRDRVAFMRVCSGRYEQGMKMHHVRLGKDVNVSDALTFMAGDRNRAEAAYPGDIIGLHNHGTIRIGDTFTQGEKLRFTGVPNFAPEMFRRIRLRDPLKQKQLLKGLVQLSEEGAVQVFRPLDSNDLIVGAVGVLQFEVVVGRLKTEYKVEAIYEAISVATARWVYCNDHKKLDEFKRKCSMNLALDGGDNLTYIAPTMVNLNLSMERYPDIEFAKTREN.

The tr-type G domain occupies 9–277; it reads DKRRTFAIIS…GIVEWAPIPQ (269 aa). Residues 18–25, 86–90, and 140–143 each bind GTP; these read SHPDAGKT, DTPGH, and NKLD.

It belongs to the TRAFAC class translation factor GTPase superfamily. Classic translation factor GTPase family. PrfC subfamily.

The protein resides in the cytoplasm. Increases the formation of ribosomal termination complexes and stimulates activities of RF-1 and RF-2. It binds guanine nucleotides and has strong preference for UGA stop codons. It may interact directly with the ribosome. The stimulation of RF-1 and RF-2 is significantly reduced by GTP and GDP, but not by GMP. This chain is Peptide chain release factor 3, found in Shewanella halifaxensis (strain HAW-EB4).